The sequence spans 585 residues: Glycerol-3-phosphate dehydrogenase 2 (585 aa).

37–65 (DVVVIGGGVVGSGCALDAATRGLKVALVE) is an FAD binding site.

The protein belongs to the FAD-dependent glycerol-3-phosphate dehydrogenase family. Requires FAD as cofactor.

Its subcellular location is the cytoplasm. The enzyme catalyses a quinone + sn-glycerol 3-phosphate = dihydroxyacetone phosphate + a quinol. This is Glycerol-3-phosphate dehydrogenase 2 (glpD2) from Mycobacterium bovis (strain ATCC BAA-935 / AF2122/97).